We begin with the raw amino-acid sequence, 335 residues long: Protein BIG1 (335 aa).

The first 17 residues, 1–17 (MQTVLKYLLLIMCGSFC), serve as a signal peptide directing secretion. Residues 20-275 (EELQNQTNVP…FDSQLIENNR (256 aa)) are Lumenal-facing. N-linked (GlcNAc...) asparagine glycans are attached at residues asparagine 24 and asparagine 144. Residues 276-296 (GLLQLIFTILVGYILIQFFFT) traverse the membrane as a helical segment. The Cytoplasmic segment spans residues 297–335 (KKTIVDEKITNKKDNVKQTSPQLLKKVQEIQKKPSQQVS).

It belongs to the BIG1 family. Post-translationally, N-glycosylated.

The protein localises to the endoplasmic reticulum membrane. Its function is as follows. Required for normal beta-1,6-glucan synthesis. The polypeptide is Protein BIG1 (BIG1) (Saccharomyces cerevisiae (strain ATCC 204508 / S288c) (Baker's yeast)).